Reading from the N-terminus, the 93-residue chain is MPRSLKKGPFVDDHLQKKVDAENAKGSHNVIKTWSRRSMIVPDMIGHTIAVHDGRKHVPVFVTDSMVGHKLGEFAPTRTYRGHVKEDRKGRRR.

The interval 1–23 (MPRSLKKGPFVDDHLQKKVDAEN) is disordered. Residues 9-23 (PFVDDHLQKKVDAEN) show a composition bias toward basic and acidic residues.

This sequence belongs to the universal ribosomal protein uS19 family.

Its function is as follows. Protein S19 forms a complex with S13 that binds strongly to the 16S ribosomal RNA. The protein is Small ribosomal subunit protein uS19 of Nocardioides sp. (strain ATCC BAA-499 / JS614).